Here is a 332-residue protein sequence, read N- to C-terminus: F-box/SPRY domain-containing protein 1 (332 aa).

Positions Met1–Val10 are enriched in acidic residues. The disordered stretch occupies residues Met1–Ser81. Polar residues predominate over residues Cys15–Lys24. An F-box domain is found at Glu79–Leu127. A B30.2/SPRY domain is found at Ser138–Gln330.

Belongs to the FBXO45/Fsn family. Component of an SCF (SKP1-CUL1-F-box protein) E3 ubiquitin ligase complex composed of cul-1, fsn-1, rpm-1 and skr-1. Interacts (via SPRY domain) with scd-2 (via cytoplasmic domain). Interacts (via SPRY domain) with convertase egl-3 (via C-terminus).

It localises to the synapse. It participates in protein modification; protein ubiquitination. In terms of biological role, component of a SCF (SKP1-CUL1-F-box protein) E3 ubiquitin ligase complex which is required for the restriction and/or maturation of synapses in GABAergic neuromuscular junction (NMJ) presynaptic neurons. Promotes NRJ synapse development and synaptic transmission by negatively regulating the daf-2/InsR pathway in muscles. By targeting convertase egl-3 for degradation, negatively modulates insulin-like protein ins-4 and ins-6 processing. May stabilize synapse formation by promoting the down-regulation of scd-2. Regulates axon termination in PLM and ALM neurons. The chain is F-box/SPRY domain-containing protein 1 (fsn-1) from Caenorhabditis briggsae.